A 145-amino-acid chain; its full sequence is Peptide methionine sulfoxide reductase MsrB (145 aa).

In terms of domain architecture, MsrB spans 6-129 (EEELKQTLTD…NAAALRFVPV (124 aa)). The active-site Nucleophile is Cys118.

Belongs to the MsrB Met sulfoxide reductase family.

The enzyme catalyses L-methionyl-[protein] + [thioredoxin]-disulfide + H2O = L-methionyl-(R)-S-oxide-[protein] + [thioredoxin]-dithiol. The chain is Peptide methionine sulfoxide reductase MsrB from Enterococcus faecalis (strain ATCC 700802 / V583).